An 84-amino-acid polypeptide reads, in one-letter code: RNA-binding protein Hfq (84 aa).

The 60-residue stretch at 9 to 68 folds into the Sm domain; that stretch reads DPYLNTLRKERVPVSIYLVNGIKLQGQIESFDQFVILLKNTVSQMVYKHAISTVVPGRPV.

The protein belongs to the Hfq family. As to quaternary structure, homohexamer.

Its function is as follows. RNA chaperone that binds small regulatory RNA (sRNAs) and mRNAs to facilitate mRNA translational regulation in response to envelope stress, environmental stress and changes in metabolite concentrations. Also binds with high specificity to tRNAs. The sequence is that of RNA-binding protein Hfq from Stutzerimonas stutzeri (strain A1501) (Pseudomonas stutzeri).